Consider the following 25-residue polypeptide: DQSCPWCGFTCCLPNYCQGLTCTVI.

Cystine bridges form between C4–C12, C7–C17, and C11–C22. Residue P5 is modified to 4-hydroxyproline.

In terms of tissue distribution, expressed by the venom duct.

The protein localises to the secreted. Functionally, causes scratching and restlessness in mice. This is Conotoxin QcVIA from Conus quercinus (Oak cone).